The primary structure comprises 249 residues: Diaminopimelate epimerase (249 aa).

Asn11 and Asn60 together coordinate substrate. Cys69 functions as the Proton donor in the catalytic mechanism. Substrate contacts are provided by residues 70–71, Asn164, and 182–183; these read GN and ER. The Proton acceptor role is filled by Cys192. A substrate-binding site is contributed by 193-194; that stretch reads GT.

It belongs to the diaminopimelate epimerase family. In terms of assembly, homodimer.

It localises to the cytoplasm. The catalysed reaction is (2S,6S)-2,6-diaminopimelate = meso-2,6-diaminopimelate. Its pathway is amino-acid biosynthesis; L-lysine biosynthesis via DAP pathway; DL-2,6-diaminopimelate from LL-2,6-diaminopimelate: step 1/1. Its function is as follows. Catalyzes the stereoinversion of LL-2,6-diaminopimelate (L,L-DAP) to meso-diaminopimelate (meso-DAP), a precursor of L-lysine and an essential component of the bacterial peptidoglycan. This chain is Diaminopimelate epimerase, found in Campylobacter jejuni (strain RM1221).